We begin with the raw amino-acid sequence, 192 residues long: uncharacterized protein (192 aa).

Residues 29-160 (HRQAAVLIPI…PLDIYRRGDS (132 aa)) form the Nudix hydrolase domain. The short motif at 67–89 (GAVDDTDTSVIAAALREAEEEVA) is the Nudix box element. 2 residues coordinate Mg(2+): E83 and E87.

The protein belongs to the Nudix hydrolase family. PCD1 subfamily. Requires Mn(2+) as cofactor. It depends on Mg(2+) as a cofactor.

Its function is as follows. Probably mediates the hydrolysis of some nucleoside diphosphate derivatives. This is an uncharacterized protein from Escherichia coli O6:H1 (strain CFT073 / ATCC 700928 / UPEC).